Reading from the N-terminus, the 715-residue chain is Polyribonucleotide nucleotidyltransferase (715 aa).

The Mg(2+) site is built by D493 and D499. The 60-residue stretch at 560-619 folds into the KH domain; it reads PRMITVKINPEKIRDVIGKGGSVIRALTEETGTTIDISDDGVVTIASTSSEGMAEAKKRI. The S1 motif domain maps to 629–697; that stretch reads GQVYEGTVLK…EKGRVRLSAK (69 aa).

It belongs to the polyribonucleotide nucleotidyltransferase family. Mg(2+) serves as cofactor.

The protein localises to the cytoplasm. It carries out the reaction RNA(n+1) + phosphate = RNA(n) + a ribonucleoside 5'-diphosphate. Its function is as follows. Involved in mRNA degradation. Catalyzes the phosphorolysis of single-stranded polyribonucleotides processively in the 3'- to 5'-direction. The sequence is that of Polyribonucleotide nucleotidyltransferase from Burkholderia orbicola (strain MC0-3).